Here is a 580-residue protein sequence, read N- to C-terminus: Peptide transporter PTR_B (580 aa).

The span at methionine 1–aspartate 30 shows a compositional bias: basic and acidic residues. The tract at residues methionine 1–histidine 45 is disordered. Residues isoleucine 57–leucine 78 traverse the membrane as a helical segment. Asparagine 101 is a glycosylation site (N-linked (GlcNAc...) asparagine). The next 11 helical transmembrane spans lie at alanine 107–alanine 127, tyrosine 134–threonine 154, threonine 163–isoleucine 183, valine 219–alanine 239, phenylalanine 249–leucine 269, alanine 326–methionine 346, isoleucine 370–isoleucine 390, isoleucine 402–phenylalanine 422, isoleucine 449–threonine 469, serine 484–leucine 504, and methionine 513–phenylalanine 533.

It belongs to the major facilitator superfamily. Proton-dependent oligopeptide transporter (POT/PTR) (TC 2.A.17) family.

The protein resides in the cell membrane. The catalysed reaction is a dipeptide(out) + H(+)(out) = a dipeptide(in) + H(+)(in). The enzyme catalyses an L-amino acid tripeptide(out) + H(+)(out) = an L-amino acid tripeptide(in) + H(+)(in). Its function is as follows. Peptide transporter that exploits the inwardly directed proton motive force to facilitate the cellular uptake of di/tripeptides. Shows strong uptake specificity towards the dipeptides Tyr-Phe and Gly-His, when compared to PTR_A and PTR_C. In Candidozyma auris (Yeast), this protein is Peptide transporter PTR_B.